Consider the following 360-residue polypeptide: Phenylalanine--tRNA ligase alpha subunit (360 aa).

Glutamate 260 is a binding site for Mg(2+).

This sequence belongs to the class-II aminoacyl-tRNA synthetase family. Phe-tRNA synthetase alpha subunit type 1 subfamily. As to quaternary structure, tetramer of two alpha and two beta subunits. The cofactor is Mg(2+).

It localises to the cytoplasm. The enzyme catalyses tRNA(Phe) + L-phenylalanine + ATP = L-phenylalanyl-tRNA(Phe) + AMP + diphosphate + H(+). This chain is Phenylalanine--tRNA ligase alpha subunit, found in Methylobacterium nodulans (strain LMG 21967 / CNCM I-2342 / ORS 2060).